The sequence spans 1094 residues: RecBCD enzyme subunit RecB (1094 aa).

Residues 1–326 (MDRFELLGPL…YTLGVNWRSD (326 aa)) form the UvrD-like helicase ATP-binding domain. A DNA-binding and helicase activity, interacts with RecC region spans residues 1-713 (MDRFELLGPL…LLRGRRPGQS (713 aa)). 21–28 (ASAGTGKT) lines the ATP pocket. The region spanning 357–613 (AGHRLASAPR…QIMTVFVAKG (257 aa)) is the UvrD-like helicase C-terminal domain. A nuclease activity, interacts with RecD and RecA region spans residues 775-1094 (TWRRTSYSDL…DLLDRGRLQS (320 aa)). Mg(2+) contacts are provided by His838, Asp975, and Asp989. Asp989 acts as the For nuclease activity in catalysis.

Belongs to the helicase family. UvrD subfamily. In terms of assembly, heterotrimer of RecB, RecC and RecD. All subunits contribute to DNA-binding. Interacts with RecA. It depends on Mg(2+) as a cofactor.

It carries out the reaction Exonucleolytic cleavage (in the presence of ATP) in either 5'- to 3'- or 3'- to 5'-direction to yield 5'-phosphooligonucleotides.. It catalyses the reaction Couples ATP hydrolysis with the unwinding of duplex DNA by translocating in the 3'-5' direction.. The catalysed reaction is ATP + H2O = ADP + phosphate + H(+). Its function is as follows. A helicase/nuclease that prepares dsDNA breaks (DSB) for recombinational DNA repair. Binds to DSBs and unwinds DNA via a highly rapid and processive ATP-dependent bidirectional helicase activity. In the holoenzyme this subunit contributes ATPase, 3'-5' helicase, exonuclease activity and loads RecA onto ssDNA. Unlike the case in E.coli, suppresses RecA-dependent homologous recombination, is instead required for single-strand annealing pathway repair of DSB. The polypeptide is RecBCD enzyme subunit RecB (Mycobacterium tuberculosis (strain CDC 1551 / Oshkosh)).